The chain runs to 462 residues: Cytokine-like nuclear factor N-PAC (462 aa).

The PWWP domain occupies 8-66; it reads IGDLVWGKLGRYPPWPGKVVSPPKDLKKPRGKKCFFVKFFGTEDHAWIKVEQLKPYHPH. Residues 91–111 are compositionally biased toward basic and acidic residues; it reads KKAKGKDQSHSDDKSKSDKGR. Residues 91 to 139 form a disordered region; sequence KKAKGKDQSHSDDKSKSDKGRKAAKPMKIIEEDDEDAFKGGSSDKPASS. A dehydrogenase domain region spans residues 169–462; that stretch reads GSITPTDKRI…MSAVYRAYIH (294 aa). NAD(+) is bound by residues 179-193, T270, and K414; that span reads GFLG…VVSN.

It belongs to the HIBADH-related family. NP60 subfamily. Homotetramere. Binds to mononucleosomes.

Its subcellular location is the nucleus. It is found in the chromosome. May have oxidoreductase activity. Regulates p38 MAP kinase activity by mediating stress activation of mapk14 and specifically regulating mapk14 signaling. Functionally, cytokine-like nuclear factor with chromatin gene reader activity involved in chromatin modification and regulation of gene expression. Acts as a nucleosome-destabilizing factor that is recruited to genes during transcriptional activation. Recognizes and binds histone H3 without a preference for specific epigenetic markers and also binds DNA. Interacts with KDM1B and promotes its histone demethylase activity by facilitating the capture of H3 tails, they form a multifunctional enzyme complex that modifies transcribed chromatin and facilitates Pol II transcription through nucleosomes. The protein is Cytokine-like nuclear factor N-PAC (glyr1) of Danio rerio (Zebrafish).